An 81-amino-acid polypeptide reads, in one-letter code: Sulfur carrier protein TusA (81 aa).

Cysteine 19 functions as the Cysteine persulfide intermediate in the catalytic mechanism.

It belongs to the sulfur carrier protein TusA family. In terms of assembly, interacts with IscS.

Its subcellular location is the cytoplasm. It participates in tRNA modification. Sulfur carrier protein involved in sulfur trafficking in the cell. Part of a sulfur-relay system required for 2-thiolation during synthesis of 2-thiouridine of the modified wobble base 5-methylaminomethyl-2-thiouridine (mnm(5)s(2)U) in tRNA. Interacts with IscS and stimulates its cysteine desulfurase activity. Accepts an activated sulfur from IscS, which is then transferred to TusD, and thus determines the direction of sulfur flow from IscS to 2-thiouridine formation. Also appears to be involved in sulfur transfer for the biosynthesis of molybdopterin. This Escherichia fergusonii (strain ATCC 35469 / DSM 13698 / CCUG 18766 / IAM 14443 / JCM 21226 / LMG 7866 / NBRC 102419 / NCTC 12128 / CDC 0568-73) protein is Sulfur carrier protein TusA.